Consider the following 340-residue polypeptide: DNA-directed RNA polymerase subunit alpha (340 aa).

Residues 1-236 (MLSLSKNWNT…EQLQLFISFE (236 aa)) are alpha N-terminal domain (alpha-NTD). An alpha C-terminal domain (alpha-CTD) region spans residues 251–340 (FSPYLLKRVD…LSKRYEDSYN (90 aa)).

It belongs to the RNA polymerase alpha chain family. As to quaternary structure, homodimer. The RNAP catalytic core consists of 2 alpha, 1 beta, 1 beta' and 1 omega subunit. When a sigma factor is associated with the core the holoenzyme is formed, which can initiate transcription.

It carries out the reaction RNA(n) + a ribonucleoside 5'-triphosphate = RNA(n+1) + diphosphate. DNA-dependent RNA polymerase catalyzes the transcription of DNA into RNA using the four ribonucleoside triphosphates as substrates. In Rickettsia akari (strain Hartford), this protein is DNA-directed RNA polymerase subunit alpha.